The sequence spans 336 residues: Immune-associated nucleotide-binding protein 13 (336 aa).

Positions 15–221 (KPERTLVLLG…YMADLSHELR (207 aa)) constitute an AIG1-type G domain. The G1 stretch occupies residues 24 to 31 (GRTGNGKS). GTP is bound by residues 24–32 (GRTGNGKSA) and S45. The tract at residues 51 to 55 (FITKE) is G2. The G3 stretch occupies residues 73–76 (DTPG). A G4 region spans residues 143-146 (TNED). The G5 stretch occupies residues 179 to 181 (DNS). Residue N180 participates in GTP binding. A coiled-coil region spans residues 265 to 328 (KEKISNQLKE…EKETASLRTE (64 aa)).

It belongs to the TRAFAC class TrmE-Era-EngA-EngB-Septin-like GTPase superfamily. AIG1/Toc34/Toc159-like paraseptin GTPase family. IAN subfamily. Expressed in pollen grains.

This is Immune-associated nucleotide-binding protein 13 from Arabidopsis thaliana (Mouse-ear cress).